The following is a 372-amino-acid chain: Cytochrome b (372 aa).

4 helical membrane passes run 25 to 45, 69 to 90, 105 to 125, and 170 to 190; these read FGSMLLTCLALQISTGFFLAI, WTMQNLHAIGASMFFICIYIHI, WLSGTVLLITLMATAFFGYVL, and FFALHFILPFLIVSLSSIHII. Positions 75 and 89 each coordinate heme b. Residues His-174 and His-188 each contribute to the heme b site. Position 193 (His-193) interacts with a ubiquinone. The next 4 membrane-spanning stretches (helical) occupy residues 218–238, 280–300, 312–332, and 339–358; these read YKDILMITVMITTLFSIMAFA, LGGTLALLMSVIILTTAPFTH, LAQMLFWTLIATFITITWTAT, and FILISQMASIIYFSFFIINP.

Belongs to the cytochrome b family. The cytochrome bc1 complex contains 3 respiratory subunits (MT-CYB, CYC1 and UQCRFS1), 2 core proteins (UQCRC1 and UQCRC2) and probably 6 low-molecular weight proteins. Heme b serves as cofactor.

It localises to the mitochondrion inner membrane. Its function is as follows. Component of the ubiquinol-cytochrome c reductase complex (complex III or cytochrome b-c1 complex) that is part of the mitochondrial respiratory chain. The b-c1 complex mediates electron transfer from ubiquinol to cytochrome c. Contributes to the generation of a proton gradient across the mitochondrial membrane that is then used for ATP synthesis. The chain is Cytochrome b (MT-CYB) from Acanthophis antarcticus (Common death adder).